The sequence spans 616 residues: UvrABC system protein C (616 aa).

One can recognise a GIY-YIG domain in the interval 21-100 (TCPGVYQFKN…IKDLKPRYNI (80 aa)). One can recognise a UVR domain in the interval 214–249 (GALIRTLSAEMHRYADELRFEEAAELKIQIEGLRKY).

It belongs to the UvrC family. Interacts with UvrB in an incision complex.

Its subcellular location is the cytoplasm. Its function is as follows. The UvrABC repair system catalyzes the recognition and processing of DNA lesions. UvrC both incises the 5' and 3' sides of the lesion. The N-terminal half is responsible for the 3' incision and the C-terminal half is responsible for the 5' incision. The polypeptide is UvrABC system protein C (Prosthecochloris aestuarii (strain DSM 271 / SK 413)).